We begin with the raw amino-acid sequence, 233 residues long: Thymidylate kinase (233 aa).

10-17 (GVDGVGKT) contacts ATP.

It belongs to the thymidylate kinase family.

It catalyses the reaction dTMP + ATP = dTDP + ADP. In terms of biological role, phosphorylation of dTMP to form dTDP in both de novo and salvage pathways of dTTP synthesis. This Bifidobacterium longum subsp. infantis (strain ATCC 15697 / DSM 20088 / JCM 1222 / NCTC 11817 / S12) protein is Thymidylate kinase.